The primary structure comprises 321 residues: Transmembrane and ubiquitin-like domain-containing protein 2 (321 aa).

Residues 36 to 56 traverse the membrane as a helical segment; that stretch reads VMVVAGVVVLILALVLAWLST. Disordered stretches follow at residues 87-131 and 145-170; these read LVAG…GGVE and KRQA…LPPS. A compositionally biased stretch (basic and acidic residues) spans 104–120; the sequence is EGNDEKAEEAGEGRGDS. The Ubiquitin-like domain maps to 174-247; the sequence is ITVRLKFLND…IHCHRSPPGS (74 aa). Transmembrane regions (helical) follow at residues 266–286 and 295–315; these read LGVN…GVVW and FFTA…SFLV.

It localises to the membrane. The protein is Transmembrane and ubiquitin-like domain-containing protein 2 (TMUB2) of Homo sapiens (Human).